Reading from the N-terminus, the 583-residue chain is CTP synthase (583 aa).

The segment at 1–278 (MRRHPQTATK…DAFVVRRLNL (278 aa)) is amidoligase domain. Residue Ser20 participates in CTP binding. UTP is bound at residue Ser20. Residues 21-26 (SLGKGL) and Asp78 contribute to the ATP site. 2 residues coordinate Mg(2+): Asp78 and Glu152. Residues 159–161 (DIE), 199–204 (KTKPTQ), and Lys235 contribute to the CTP site. Residues 199–204 (KTKPTQ) and Lys235 each bind UTP. The Glutamine amidotransferase type-1 domain maps to 303–551 (RIALVGKYVE…VKAAIDYKEG (249 aa)). Gly366 serves as a coordination point for L-glutamine. Cys393 functions as the Nucleophile; for glutamine hydrolysis in the catalytic mechanism. L-glutamine is bound by residues 394–397 (LGLQ), Glu416, and Arg477. Catalysis depends on residues His524 and Glu526. The disordered stretch occupies residues 559-583 (PERVSNGAERRDQVGQSIPEPANRG).

It belongs to the CTP synthase family. As to quaternary structure, homotetramer.

It catalyses the reaction UTP + L-glutamine + ATP + H2O = CTP + L-glutamate + ADP + phosphate + 2 H(+). The catalysed reaction is L-glutamine + H2O = L-glutamate + NH4(+). It carries out the reaction UTP + NH4(+) + ATP = CTP + ADP + phosphate + 2 H(+). It participates in pyrimidine metabolism; CTP biosynthesis via de novo pathway; CTP from UDP: step 2/2. Its activity is regulated as follows. Allosterically activated by GTP, when glutamine is the substrate; GTP has no effect on the reaction when ammonia is the substrate. The allosteric effector GTP functions by stabilizing the protein conformation that binds the tetrahedral intermediate(s) formed during glutamine hydrolysis. Inhibited by the product CTP, via allosteric rather than competitive inhibition. Its function is as follows. Catalyzes the ATP-dependent amination of UTP to CTP with either L-glutamine or ammonia as the source of nitrogen. Regulates intracellular CTP levels through interactions with the four ribonucleotide triphosphates. In Mycobacterium marinum (strain ATCC BAA-535 / M), this protein is CTP synthase.